The chain runs to 622 residues: UvrABC system protein C (622 aa).

The GIY-YIG domain maps to 12–91 (SSPGVYIMKD…IKKYRPKYNF (80 aa)). Residues 201 to 236 (REILKIFRERMSAAAAAEKYEKAARFRDLIRSIEVT) form the UVR domain.

It belongs to the UvrC family. In terms of assembly, interacts with UvrB in an incision complex.

The protein localises to the cytoplasm. The UvrABC repair system catalyzes the recognition and processing of DNA lesions. UvrC both incises the 5' and 3' sides of the lesion. The N-terminal half is responsible for the 3' incision and the C-terminal half is responsible for the 5' incision. This is UvrABC system protein C from Geotalea daltonii (strain DSM 22248 / JCM 15807 / FRC-32) (Geobacter daltonii).